Reading from the N-terminus, the 354-residue chain is uncharacterized protein (354 aa).

Residues 309–326 (VNSANSINTANTRSQTGG) show a composition bias toward polar residues. The interval 309–333 (VNSANSINTANTRSQTGGQDEEDFE) is disordered. The stretch at 326-353 (GQDEEDFEKKYKKYKNKYAKLKNQKTSN) forms a coiled coil.

Its subcellular location is the virion. This is an uncharacterized protein from Acanthamoeba polyphaga (Amoeba).